Reading from the N-terminus, the 267-residue chain is Undecaprenyl-diphosphatase (267 aa).

8 helical membrane passes run 1–21 (MSYFEAFMLALVQGFTEFLPI), 39–59 (QGLAFDVAVHVGTLAAVVIYF), 83–103 (AKLAWMIILATIPACIFGLLM), 111–131 (LRSAWVIATTTIIFGLLLWWV), 144–164 (AGWKKALFIGLAQAMAIIPGT), 189–209 (FLMSIPIITLAGGYLGLKLVT), 218–238 (TLLTGIVVSFISAYICIHFFL), and 246–266 (MTPFVIYRLILGFGLFAFLMM).

It belongs to the UppP family.

It localises to the cell inner membrane. It carries out the reaction di-trans,octa-cis-undecaprenyl diphosphate + H2O = di-trans,octa-cis-undecaprenyl phosphate + phosphate + H(+). Its function is as follows. Catalyzes the dephosphorylation of undecaprenyl diphosphate (UPP). Confers resistance to bacitracin. The sequence is that of Undecaprenyl-diphosphatase from Vibrio atlanticus (strain LGP32) (Vibrio splendidus (strain Mel32)).